The primary structure comprises 213 residues: Phosphoenolpyruvate guanylyltransferase (213 aa).

Threonine 146, glycine 161, and serine 164 together coordinate phosphoenolpyruvate.

This sequence belongs to the CofC family.

The enzyme catalyses phosphoenolpyruvate + GTP + H(+) = enolpyruvoyl-2-diphospho-5'-guanosine + diphosphate. Its pathway is cofactor biosynthesis; coenzyme F420 biosynthesis. In terms of biological role, guanylyltransferase that catalyzes the activation of phosphoenolpyruvate (PEP) as enolpyruvoyl-2-diphospho-5'-guanosine, via the condensation of PEP with GTP. It is involved in the biosynthesis of coenzyme F420, a hydride carrier cofactor. The protein is Phosphoenolpyruvate guanylyltransferase of Mycolicibacterium vanbaalenii (strain DSM 7251 / JCM 13017 / BCRC 16820 / KCTC 9966 / NRRL B-24157 / PYR-1) (Mycobacterium vanbaalenii).